A 221-amino-acid chain; its full sequence is Putative transmembrane protein ORF25 (221 aa).

Positions methionine 1 to serine 23 are cleaved as a signal peptide. N-linked (GlcNAc...) asparagine; by host glycans are attached at residues asparagine 19 and asparagine 179. The Extracellular segment spans residues glutamine 24–serine 191. The chain crosses the membrane as a helical span at residues valine 192 to isoleucine 212. The Cytoplasmic segment spans residues alanine 213–histidine 221.

The protein localises to the host membrane. In Ostreid herpesvirus 1 (isolate France) (OsHV-1), this protein is Putative transmembrane protein ORF25.